A 694-amino-acid polypeptide reads, in one-letter code: Elongation factor G (694 aa).

Residues 9-288 enclose the tr-type G domain; the sequence is SKIRNIGIMA…VIVKWLPSPK (280 aa). Residues 18-25, 82-86, and 136-139 contribute to the GTP site; these read AHIDAGKT, DTPGH, and NKMD.

This sequence belongs to the TRAFAC class translation factor GTPase superfamily. Classic translation factor GTPase family. EF-G/EF-2 subfamily.

The protein resides in the cytoplasm. Functionally, catalyzes the GTP-dependent ribosomal translocation step during translation elongation. During this step, the ribosome changes from the pre-translocational (PRE) to the post-translocational (POST) state as the newly formed A-site-bound peptidyl-tRNA and P-site-bound deacylated tRNA move to the P and E sites, respectively. Catalyzes the coordinated movement of the two tRNA molecules, the mRNA and conformational changes in the ribosome. The chain is Elongation factor G from Chlamydia felis (strain Fe/C-56) (Chlamydophila felis).